We begin with the raw amino-acid sequence, 4555 residues long: Protocadherin Fat 3 (4555 aa).

An N-terminal signal peptide occupies residues 1 to 31 (MSVTMGHCMGTKPPSCIILLLLKLFATVSQG). Topologically, residues 32–4153 (LPGTGPLGFH…AGHSYVGKEE (4122 aa)) are extracellular. Cadherin domains lie at 43-157 (THST…RPLF), 158-262 (SPTT…NEHA), 263-374 (PIIH…TPVR), 376-471 (EKDV…TPEF), 472-577 (QEAL…SPLF), 578-680 (EKVA…SKSF), 726-830 (KSFP…NPVF), 831-935 (LQDS…SPAF), 936-1042 (IPSS…TPYF), 1043-1147 (PDFA…APLT), 1148-1253 (SEPI…RPQF), 1254-1358 (PEKV…SPIP), 1362-1459 (DEPF…GPEF), 1460-1565 (SQPH…SPYF), 1566-1768 (TNPL…PPVF), 1769-1882 (LFSQ…PPVF), 1883-1985 (TQAV…TQSF), 1982-2083 (TQSF…SPVF), 2084-2185 (VGLP…MPVF), 2186-2286 (DKPF…PPVF), 2287-2393 (DQPT…PPVF), 2394-2495 (NQLI…SPAF), 2496-2599 (SQST…APQF), 2600-2707 (MTVE…LPSF), 2708-2813 (TQSQ…KPVF), 2814-2923 (ETST…APVF), 2924-3028 (AHEV…SPVC), 3029-3130 (DQVA…PPVF), 3131-3235 (SSNH…PPVF), 3236-3340 (ERRD…PPRF), 3341-3445 (SQDV…SPVF), 3446-3550 (TPAN…KPTA), and 3551-3660 (IPLE…PEDF). N48 carries N-linked (GlcNAc...) asparagine glycosylation. A glycan (N-linked (GlcNAc...) asparagine) is linked at N341. N481, N562, N667, N799, N879, N898, and N1006 each carry an N-linked (GlcNAc...) asparagine glycan. 2 N-linked (GlcNAc...) asparagine glycosylation sites follow: N1367 and N1429. Residue N1751 is glycosylated (N-linked (GlcNAc...) asparagine). N1944, N1993, and N1996 each carry an N-linked (GlcNAc...) asparagine glycan. N-linked (GlcNAc...) asparagine glycans are attached at residues N2208, N2292, N2331, and N2467. N2734 carries an N-linked (GlcNAc...) asparagine glycan. Residue N3000 is glycosylated (N-linked (GlcNAc...) asparagine). The N-linked (GlcNAc...) asparagine glycan is linked to N3201. N-linked (GlcNAc...) asparagine glycosylation is found at N3449, N3618, and N3741. The EGF-like 1 domain maps to 3794 to 3832 (SNDPCVEKPCPEDMQCVGYEASRRPFLCQCPPGKLGECS). 3 disulfide bridges follow: C3798–C3809, C3803–C3821, and C3823–C3831. A Laminin G-like domain is found at 3834 to 4017 (HTSLSFAGNS…VGLTELKLGC (184 aa)). N3926 carries an N-linked (GlcNAc...) asparagine glycan. 10 cysteine pairs are disulfide-bonded: C3984–C4017, C4024–C4035, C4029–C4045, C4047–C4056, C4063–C4074, C4068–C4083, C4085–C4094, C4101–C4112, C4106–C4121, and C4123–C4132. EGF-like domains are found at residues 4020–4057 (YPDA…TNCE) and 4059–4095 (EITA…VTCE). The region spanning 4097–4133 (DVDECEREECENGGSCVNLFGSFFCNCTPGYVGQYCG) is the EGF-like 4; calcium-binding domain. The chain crosses the membrane as a helical span at residues 4154 to 4174 (LIGIAVVLFVIFTLIVLFIVF). The Cytoplasmic portion of the chain corresponds to 4175 to 4555 (RKKVFRKNYS…FVETQQQTQV (381 aa)). Disordered stretches follow at residues 4300–4353 (IRKN…YHWD) and 4395–4474 (GGYD…LGGP). Polar residues predominate over residues 4322-4343 (CFTNSNKGSNSEVQSLSSFQSD). R4508 and R4518 each carry omega-N-methylarginine.

In terms of tissue distribution, restricted to the nervous system, mainly in brain. In brain, it is highly expressed in the olfactory bulb and retina. In the developing olfactory bulb, it localizes along the dendrites of these cells as well as in their axons to some extent. In retina, it cocentrates in the inner plexiform layer throughout development (at protein level).

Its subcellular location is the membrane. Functionally, may play a role in the interactions between neurites derived from specific subsets of neurons during development. The chain is Protocadherin Fat 3 (Fat3) from Mus musculus (Mouse).